The sequence spans 444 residues: ATP-dependent protease ATPase subunit HslU (444 aa).

Residues Ile-18 and 60 to 65 (GVGKTE) each bind ATP. The tract at residues 141–161 (DAWGNNEEGDNDSGTRQSFRK) is disordered. Positions 257, 322, and 394 each coordinate ATP.

This sequence belongs to the ClpX chaperone family. HslU subfamily. As to quaternary structure, a double ring-shaped homohexamer of HslV is capped on each side by a ring-shaped HslU homohexamer. The assembly of the HslU/HslV complex is dependent on binding of ATP.

The protein localises to the cytoplasm. ATPase subunit of a proteasome-like degradation complex; this subunit has chaperone activity. The binding of ATP and its subsequent hydrolysis by HslU are essential for unfolding of protein substrates subsequently hydrolyzed by HslV. HslU recognizes the N-terminal part of its protein substrates and unfolds these before they are guided to HslV for hydrolysis. This chain is ATP-dependent protease ATPase subunit HslU, found in Aliivibrio fischeri (strain MJ11) (Vibrio fischeri).